Consider the following 380-residue polypeptide: MRKNLWTFQFGGEASGLVGSAMVSQHFVVLLMSLYCLTQSVVESSSWWSLGMNPVQMPEVYIIGAQPLCSQLSGLSQGQKKLCQLYQDHMQFIGDGAKTGIKECQYQFRHRRWNCSTVDNTSVFGRVMQIGSRETAFTYAISAAGVVNAVSRACREGELSTCGCSRAARPKDLPRDWLWGGCGDNLDYGYRFAKEFVDAREREKIHQKGSYESSRIMMNLHNNEAGRRAVSTLADVACKCHGVSGSCSLKTCWLQLADFRKVGDHLKEKYDSAGAMKLNTRGKLVQVNNKFNSPTMNDLVYIDPSPDYCVHNESTGSLGTQGRLCNKTSEGMDGCELMCCGRGYDQFKTVQTERCHCKFHWCCYVKCKKCTEVVDQFACK.

A signal peptide spans 1–40; the sequence is MRKNLWTFQFGGEASGLVGSAMVSQHFVVLLMSLYCLTQS. Residues cysteine 104 and cysteine 115 are joined by a disulfide bond. Residues asparagine 114 and asparagine 120 are each glycosylated (N-linked (GlcNAc...) asparagine). 10 disulfide bridges follow: cysteine 154–cysteine 162, cysteine 164–cysteine 182, cysteine 238–cysteine 252, cysteine 240–cysteine 247, cysteine 309–cysteine 340, cysteine 325–cysteine 335, cysteine 339–cysteine 379, cysteine 355–cysteine 370, cysteine 357–cysteine 367, and cysteine 362–cysteine 363. The O-palmitoleoyl serine; by PORCN moiety is linked to residue serine 244. N-linked (GlcNAc...) asparagine glycans are attached at residues asparagine 312 and asparagine 326.

The protein belongs to the Wnt family. In terms of processing, palmitoleoylation is required for efficient binding to frizzled receptors. Depalmitoleoylation leads to Wnt signaling pathway inhibition. In terms of tissue distribution, found primarily in ectoderm with lower levels of expression in mesoderm. Detected in the head and tail with lower expression in the middle of the embryo. No expression was found in the notochord.

It localises to the secreted. The protein localises to the extracellular space. Its subcellular location is the extracellular matrix. In terms of biological role, ligand for members of the frizzled family of seven transmembrane receptors. Can activate or inhibit canonical Wnt signaling, depending on receptor context. Plays a role in normal embryonic development. This is Protein Wnt-5a (wnt5a) from Xenopus laevis (African clawed frog).